Reading from the N-terminus, the 398-residue chain is MSVDKIVLAYSGGLDTSVILKWLANEYECPVVAYSANIGQIEDWDAVKEKGMATGADKVIVSDLQKEFVEDYIFPAFRASAIYEGTYLLGTSLARPLISKEQVRIAHAEGANAVSHGATGKGNDQVRFELGYIGLDPSLQIIAPWRTWDLNSRTRLEEYAKQHNIPVPTTKKNPYSSDENLLHISFEGGILESPWNEPDPDMFKLTVSPEMAPDKPTYLEITFQNGDPIALDGVAMEPLELFRALNKVAGENAVGRLDLVENRFVGMKSRGVYETPGGTLLYHAHRDLETICLDREVMKIRDSLVPRYAELIYNGFWFSPERELLQMTMDTAQKTVSGVVRMKLYKGNCFSVGRKSDQSLYKEDFATFEADDVYDQGDATGFIRLNGLRLKINALQGK.

Residues 9–17 (AYSGGLDTS) and Ala-36 contribute to the ATP site. Positions 87 and 92 each coordinate L-citrulline. Gly-117 is a binding site for ATP. Residues Thr-119, Asn-123, and Asp-124 each coordinate L-aspartate. Asn-123 lines the L-citrulline pocket. 5 residues coordinate L-citrulline: Arg-127, Ser-176, Ser-185, Glu-261, and Tyr-273.

It belongs to the argininosuccinate synthase family. Type 1 subfamily. As to quaternary structure, homotetramer.

The protein localises to the cytoplasm. It catalyses the reaction L-citrulline + L-aspartate + ATP = 2-(N(omega)-L-arginino)succinate + AMP + diphosphate + H(+). It functions in the pathway amino-acid biosynthesis; L-arginine biosynthesis; L-arginine from L-ornithine and carbamoyl phosphate: step 2/3. The sequence is that of Argininosuccinate synthase from Desulfotalea psychrophila (strain LSv54 / DSM 12343).